We begin with the raw amino-acid sequence, 275 residues long: NH(3)-dependent NAD(+) synthetase (275 aa).

46 to 53 (GISGGQDS) contacts ATP. Position 52 (Asp-52) interacts with Mg(2+). Position 140 (Arg-140) interacts with deamido-NAD(+). Residue Thr-160 participates in ATP binding. Glu-165 contributes to the Mg(2+) binding site. The deamido-NAD(+) site is built by Lys-173 and Asp-180. Residues Lys-189 and Thr-211 each contribute to the ATP site. 260–261 (HK) is a deamido-NAD(+) binding site.

It belongs to the NAD synthetase family. As to quaternary structure, homodimer.

The catalysed reaction is deamido-NAD(+) + NH4(+) + ATP = AMP + diphosphate + NAD(+) + H(+). The protein operates within cofactor biosynthesis; NAD(+) biosynthesis; NAD(+) from deamido-NAD(+) (ammonia route): step 1/1. Functionally, catalyzes the ATP-dependent amidation of deamido-NAD to form NAD. Uses ammonia as a nitrogen source. The polypeptide is NH(3)-dependent NAD(+) synthetase (Enterobacter sp. (strain 638)).